The primary structure comprises 254 residues: NAD-dependent protein deacetylase 1 (254 aa).

The Deacetylase sirtuin-type domain maps to 3–252 (VDFTTDELDE…PKLLDRLRGM (250 aa)). Residues alanine 29, threonine 33, phenylalanine 40, arginine 41, glutamine 105, valine 107, aspartate 108, and histidine 123 each coordinate NAD(+). Nicotinamide is bound at residue phenylalanine 40. Residues valine 107 and aspartate 108 each coordinate nicotinamide. The active-site Proton acceptor is histidine 123. Cysteine 131, cysteine 134, cysteine 154, and cysteine 157 together coordinate Zn(2+). Positions 195, 196, and 220 each coordinate NAD(+).

The protein belongs to the sirtuin family. Class U subfamily. The cofactor is Zn(2+).

The protein localises to the cytoplasm. The enzyme catalyses N(6)-acetyl-L-lysyl-[protein] + NAD(+) + H2O = 2''-O-acetyl-ADP-D-ribose + nicotinamide + L-lysyl-[protein]. NAD-dependent protein deacetylase which modulates the activities of several enzymes which are inactive in their acetylated form. Deacetylates the N-terminal lysine residue of Alba, the major archaeal chromatin protein and that, in turn, increases Alba's DNA binding affinity, thereby repressing transcription. The sequence is that of NAD-dependent protein deacetylase 1 from Pyrobaculum aerophilum (strain ATCC 51768 / DSM 7523 / JCM 9630 / CIP 104966 / NBRC 100827 / IM2).